Here is a 111-residue protein sequence, read N- to C-terminus: PCNA-associated factor (111 aa).

A compositionally biased stretch (polar residues) spans 1-10 (MVRTKANSVP). The interval 1–111 (MVRTKANSVP…PPDHTDDEKE (111 aa)) is disordered. Serine 8 bears the Phosphoserine mark. A Glycyl lysine isopeptide (Lys-Gly) (interchain with G-Cter in ubiquitin) cross-link involves residue lysine 15. The short motif at 23–34 (RKVLGSSTSAAN) is the D-box element. N6-acetyllysine; alternate is present on lysine 24. Lysine 24 is covalently cross-linked (Glycyl lysine isopeptide (Lys-Gly) (interchain with G-Cter in ubiquitin); alternate). Over residues 27–39 (GSSTSAANSTPLS) the composition is skewed to polar residues. Residues serine 28, serine 31, and serine 72 each carry the phosphoserine modification. Positions 62 to 72 (QKGIGEFFSLS) match the PIP-box motif. Residues 74-84 (KDSEKENRIPE) are compositionally biased toward basic and acidic residues. The KEN box signature appears at 78–80 (KEN). An Initiation motif motif is present at residues 85 to 97 (EAGSSGLGKAKRK).

In terms of assembly, interacts (when monoubiquitinated at Lys-15 and Lys-24) with PCNA. Interacts with isoform 2/p33ING1b of ING1. Interacts with BRCA1. In terms of processing, monoubiquitinated at Lys-15 and Lys-24 during normal S phase, promoting its association with PCNA. Also diubiquitinated at these 2 sites. Following DNA damage, monoubiquitin chains at Lys-15 and Lys-24 are probably extended, leading to disrupt the interaction with PCNA. Polyubiquitinated by the APC/C complex at the mitotic exit, leading to its degradation by the proteasome.

The protein localises to the nucleus. It localises to the cytoplasm. The protein resides in the perinuclear region. Its function is as follows. PCNA-binding protein that acts as a regulator of DNA repair during DNA replication. Following DNA damage, the interaction with PCNA is disrupted, facilitating the interaction between monoubiquitinated PCNA and the translesion DNA synthesis DNA polymerase eta (POLH) at stalled replisomes, facilitating the bypass of replication-fork-blocking lesions. Also acts as a regulator of centrosome number. In Bos taurus (Bovine), this protein is PCNA-associated factor.